A 508-amino-acid chain; its full sequence is Photosystem II CP47 reaction center protein (508 aa).

The next 6 helical transmembrane spans lie at 21 to 36 (SVHI…WAGS), 101 to 115 (IVFS…IWHW), 140 to 156 (GIHL…FGAF), 203 to 218 (IAAG…FHLS), 237 to 252 (VLSS…AFVV), and 457 to 472 (SFAL…HGAR).

This sequence belongs to the PsbB/PsbC family. PsbB subfamily. PSII is composed of 1 copy each of membrane proteins PsbA, PsbB, PsbC, PsbD, PsbE, PsbF, PsbH, PsbI, PsbJ, PsbK, PsbL, PsbM, PsbT, PsbX, PsbY, PsbZ, Psb30/Ycf12, at least 3 peripheral proteins of the oxygen-evolving complex and a large number of cofactors. It forms dimeric complexes. Requires Binds multiple chlorophylls. PSII binds additional chlorophylls, carotenoids and specific lipids. as cofactor.

It is found in the plastid. It localises to the chloroplast thylakoid membrane. One of the components of the core complex of photosystem II (PSII). It binds chlorophyll and helps catalyze the primary light-induced photochemical processes of PSII. PSII is a light-driven water:plastoquinone oxidoreductase, using light energy to abstract electrons from H(2)O, generating O(2) and a proton gradient subsequently used for ATP formation. The sequence is that of Photosystem II CP47 reaction center protein from Lactuca sativa (Garden lettuce).